The following is a 190-amino-acid chain: GTP cyclohydrolase 1 (190 aa).

3 residues coordinate Zn(2+): Cys-75, His-78, and Cys-146.

It belongs to the GTP cyclohydrolase I family. Toroid-shaped homodecamer, composed of two pentamers of five dimers.

It carries out the reaction GTP + H2O = 7,8-dihydroneopterin 3'-triphosphate + formate + H(+). Its pathway is cofactor biosynthesis; 7,8-dihydroneopterin triphosphate biosynthesis; 7,8-dihydroneopterin triphosphate from GTP: step 1/1. This is GTP cyclohydrolase 1 from Campylobacter jejuni (strain RM1221).